Here is a 195-residue protein sequence, read N- to C-terminus: 3-isopropylmalate dehydratase small subunit (195 aa).

The protein belongs to the LeuD family. LeuD type 1 subfamily. In terms of assembly, heterodimer of LeuC and LeuD.

The catalysed reaction is (2R,3S)-3-isopropylmalate = (2S)-2-isopropylmalate. Its pathway is amino-acid biosynthesis; L-leucine biosynthesis; L-leucine from 3-methyl-2-oxobutanoate: step 2/4. Functionally, catalyzes the isomerization between 2-isopropylmalate and 3-isopropylmalate, via the formation of 2-isopropylmaleate. This is 3-isopropylmalate dehydratase small subunit from Parafrankia sp. (strain EAN1pec).